Here is a 316-residue protein sequence, read N- to C-terminus: Solute carrier family 25 member 32 (316 aa).

Solcar repeat units lie at residues 20 to 109 (HVRY…IKSY), 118 to 209 (LEPL…LKLK), and 222 to 306 (LSTA…VSHF). 6 helical membrane-spanning segments follow: residues 26-46 (LVAG…LDLV), 89-106 (VWGA…YNAI), 123-143 (YLVS…PLWV), 185-203 (GFVP…FMAY), 227-243 (YISV…AATY), and 281-300 (GIAP…FVVY).

This sequence belongs to the mitochondrial carrier (TC 2.A.29) family.

The protein localises to the mitochondrion inner membrane. It carries out the reaction FAD(in) = FAD(out). In terms of biological role, facilitates flavin adenine dinucleotide (FAD) translocation across the mitochondrial inner membrane into the mitochondrial matrix where it acts as a redox cofactor to assist flavoenzyme activities in fundamental metabolic processes including fatty acid beta-oxidation, amino acid and choline metabolism as well as mitochondrial electron transportation. In particular, provides FAD to DLD dehydrogenase of the glycine cleavage system, part of mitochondrial one-carbon metabolic pathway involved in neural tube closure in early embryogenesis. The sequence is that of Solute carrier family 25 member 32 from Mus musculus (Mouse).